A 447-amino-acid polypeptide reads, in one-letter code: Tubulin beta-1 chain (447 aa).

GTP contacts are provided by Gln-11, Glu-69, Ser-138, Gly-142, Thr-143, Gly-144, Asn-204, and Asn-226. Glu-69 serves as a coordination point for Mg(2+).

This sequence belongs to the tubulin family. As to quaternary structure, dimer of alpha and beta chains. A typical microtubule is a hollow water-filled tube with an outer diameter of 25 nm and an inner diameter of 15 nM. Alpha-beta heterodimers associate head-to-tail to form protofilaments running lengthwise along the microtubule wall with the beta-tubulin subunit facing the microtubule plus end conferring a structural polarity. Microtubules usually have 13 protofilaments but different protofilament numbers can be found in some organisms and specialized cells. It depends on Mg(2+) as a cofactor.

The protein resides in the cytoplasm. It is found in the cytoskeleton. Functionally, tubulin is the major constituent of microtubules, a cylinder consisting of laterally associated linear protofilaments composed of alpha- and beta-tubulin heterodimers. Microtubules grow by the addition of GTP-tubulin dimers to the microtubule end, where a stabilizing cap forms. Below the cap, tubulin dimers are in GDP-bound state, owing to GTPase activity of alpha-tubulin. In Geotrichum candidum (Oospora lactis), this protein is Tubulin beta-1 chain.